A 180-amino-acid chain; its full sequence is Ribulose bisphosphate carboxylase small subunit, chloroplastic 2 (180 aa).

Residues 1-56 constitute a chloroplast transit peptide; it reads MASSVMSSAAVATSTNAAQASMVAPFTGLKSAASFPVSRKQNLDITSIASNGGRVQ.

It belongs to the RuBisCO small chain family. As to quaternary structure, heterohexadecamer of 8 large and 8 small subunits.

It is found in the plastid. The protein localises to the chloroplast. In terms of biological role, ruBisCO catalyzes two reactions: the carboxylation of D-ribulose 1,5-bisphosphate, the primary event in carbon dioxide fixation, as well as the oxidative fragmentation of the pentose substrate. Both reactions occur simultaneously and in competition at the same active site. Although the small subunit is not catalytic it is essential for maximal activity. This chain is Ribulose bisphosphate carboxylase small subunit, chloroplastic 2, found in Petunia hybrida (Petunia).